A 154-amino-acid chain; its full sequence is 6,7-dimethyl-8-ribityllumazine synthase (154 aa).

Residues phenylalanine 22, 56-58, and 81-83 contribute to the 5-amino-6-(D-ribitylamino)uracil site; these read SFE and VLI. Residue 86–87 participates in (2S)-2-hydroxy-3-oxobutyl phosphate binding; sequence ET. Histidine 89 functions as the Proton donor in the catalytic mechanism. Position 114 (phenylalanine 114) interacts with 5-amino-6-(D-ribitylamino)uracil. Arginine 128 contacts (2S)-2-hydroxy-3-oxobutyl phosphate.

This sequence belongs to the DMRL synthase family.

The catalysed reaction is (2S)-2-hydroxy-3-oxobutyl phosphate + 5-amino-6-(D-ribitylamino)uracil = 6,7-dimethyl-8-(1-D-ribityl)lumazine + phosphate + 2 H2O + H(+). The protein operates within cofactor biosynthesis; riboflavin biosynthesis; riboflavin from 2-hydroxy-3-oxobutyl phosphate and 5-amino-6-(D-ribitylamino)uracil: step 1/2. Its function is as follows. Catalyzes the formation of 6,7-dimethyl-8-ribityllumazine by condensation of 5-amino-6-(D-ribitylamino)uracil with 3,4-dihydroxy-2-butanone 4-phosphate. This is the penultimate step in the biosynthesis of riboflavin. The polypeptide is 6,7-dimethyl-8-ribityllumazine synthase (Chlamydia felis (strain Fe/C-56) (Chlamydophila felis)).